A 486-amino-acid chain; its full sequence is Probable transporter MCH1 (486 aa).

Residues 1-29 (MPLSKVEHYLSYHTRLLLPHVLSLQSSHR) lie on the Cytoplasmic side of the membrane. A helical membrane pass occupies residues 30-50 (VAYIFSLLSAVSTGFITLISL). The Vacuolar segment spans residues 51–67 (YSQPWQKHLNYSSWQIN). Asparagine 60 is a glycosylation site (N-linked (GlcNAc...) asparagine). Residues 68–88 (TIASMTNLGMYLTPPILGMIA) traverse the membrane as a helical segment. Residues 89-93 (DSHGP) are Cytoplasmic-facing. A helical transmembrane segment spans residues 94–114 (ITLSLLAIIGFIPSYSYLAYV). Residues 115–133 (FNHPELSLGGNGDSSFNLS) lie on the Vacuolar side of the membrane. The N-linked (GlcNAc...) asparagine glycan is linked to asparagine 131. Residues 134–154 (IICFVFIGISTSALYFSALLT) form a helical membrane-spanning segment. The Cytoplasmic portion of the chain corresponds to 155–163 (CTKLYPHTK). The chain crosses the membrane as a helical span at residues 164–184 (LLSISLPTTCYGISSVVGSQL). Over 185 to 212 (LRIKWFWSSNASSSSSNSDLNLGRVFQT) the chain is Vacuolar. N-linked (GlcNAc...) asparagine glycosylation occurs at asparagine 194. The chain crosses the membrane as a helical span at residues 213–233 (FALVYVVIGLLAWIATSVVSL). Over 234–279 (LHFNEEQDNQKRLDDQTDVEQSPLLERSNHVQEKFTQTMLRIFSDP) the chain is Cytoplasmic. Serine 255 carries the phosphoserine modification. A helical transmembrane segment spans residues 280–300 (VTYILAVSILLSLGPLEMFIA). Residues 301–320 (NMGSLTNLLVQLDAPTLSTK) lie on the Vacuolar side of the membrane. The helical transmembrane segment at 321–343 (LLSTYALSSTFTRLLTGIVADFF) threads the bilayer. The Cytoplasmic portion of the chain corresponds to 344 to 347 (AKKK). A helical membrane pass occupies residues 348-368 (ISIKWILLTFLSLGVCAQLFL). Residues 369 to 385 (LKMTSSASPWGLVPTGS) lie on the Vacuolar side of the membrane. Residues 386 to 406 (LVGIVYGGLFTVYPTLVLLVW) traverse the membrane as a helical segment. The Cytoplasmic portion of the chain corresponds to 407–413 (GERSFGT). The helical transmembrane segment at 414–434 (VYGSLLIAPAIGSMIFCMLYA) threads the bilayer. Residues 435–456 (KFYDSRCMSGGGDLRNPSCISA) lie on the Vacuolar side of the membrane. Residues 457–477 (VYKYSSIAFVVSAVLSAVVFW) form a helical membrane-spanning segment. The Cytoplasmic portion of the chain corresponds to 478-486 (KLKSRKLRI).

It belongs to the major facilitator superfamily.

It localises to the vacuole membrane. In terms of biological role, probable transporter. Does not act in the transport of monocarboxylic acids across the plasma membrane. The chain is Probable transporter MCH1 (MCH1) from Saccharomyces cerevisiae (strain ATCC 204508 / S288c) (Baker's yeast).